A 146-amino-acid chain; its full sequence is Large ribosomal subunit protein uL15 (146 aa).

Positions 1–13 (MKLNELKPNEGSR) are enriched in basic and acidic residues. Residues 1-54 (MKLNELKPNEGSRRNRKRVGRGTSSGYGKTAGRGQKGQLARTGGKTRLGFEGGQ) are disordered. Residues 23-35 (TSSGYGKTAGRGQ) show a composition bias toward gly residues.

It belongs to the universal ribosomal protein uL15 family. Part of the 50S ribosomal subunit.

Functionally, binds to the 23S rRNA. In Lactobacillus gasseri (strain ATCC 33323 / DSM 20243 / BCRC 14619 / CIP 102991 / JCM 1131 / KCTC 3163 / NCIMB 11718 / NCTC 13722 / AM63), this protein is Large ribosomal subunit protein uL15.